Consider the following 114-residue polypeptide: UPF0102 protein CD630_12710 (114 aa).

Belongs to the UPF0102 family.

In Clostridioides difficile (strain 630) (Peptoclostridium difficile), this protein is UPF0102 protein CD630_12710.